We begin with the raw amino-acid sequence, 54 residues long: Photoreceptor disk component PRCD (54 aa).

The S-palmitoyl cysteine moiety is linked to residue cysteine 2. The interval 25 to 54 is disordered; the sequence is PEPSDVDGAARGSSLDADPQSSGREKEPLK.

It belongs to the PRCD family. In terms of assembly, interacts with RHO/rhodopsin; the interaction promotes PRCD stability. In terms of processing, palmitoylated at Cys-2. Palmitoylation is essential for protein stability and trafficking to the photoreceptor outer segment, but does not appear to be essential for membrane localization. Probably palmitoylated by ZDHHC3. Post-translationally, phosphorylated.

The protein resides in the cell projection. The protein localises to the cilium. It localises to the photoreceptor outer segment. Its subcellular location is the membrane. It is found in the endoplasmic reticulum. The protein resides in the golgi apparatus. Functionally, involved in vision. This Homo sapiens (Human) protein is Photoreceptor disk component PRCD.